A 389-amino-acid chain; its full sequence is Lipid-A-disaccharide synthase (389 aa).

Belongs to the LpxB family.

The enzyme catalyses a lipid X + a UDP-2-N,3-O-bis[(3R)-3-hydroxyacyl]-alpha-D-glucosamine = a lipid A disaccharide + UDP + H(+). It participates in bacterial outer membrane biogenesis; LPS lipid A biosynthesis. Its function is as follows. Condensation of UDP-2,3-diacylglucosamine and 2,3-diacylglucosamine-1-phosphate to form lipid A disaccharide, a precursor of lipid A, a phosphorylated glycolipid that anchors the lipopolysaccharide to the outer membrane of the cell. The sequence is that of Lipid-A-disaccharide synthase from Burkholderia lata (strain ATCC 17760 / DSM 23089 / LMG 22485 / NCIMB 9086 / R18194 / 383).